The primary structure comprises 224 residues: Superoxide dismutase [Mn], mitochondrial (224 aa).

The N-terminal 20 residues, 1–20 (MLLARAFARRSLRAGLWCRQ), are a transit peptide targeting the mitochondrion. His-46, His-94, Asp-177, and His-181 together coordinate Mn(2+).

This sequence belongs to the iron/manganese superoxide dismutase family. As to quaternary structure, homotetramer. It depends on Mn(2+) as a cofactor.

It localises to the mitochondrion matrix. It catalyses the reaction 2 superoxide + 2 H(+) = H2O2 + O2. Its function is as follows. Destroys superoxide anion radicals which are normally produced within the cells and which are toxic to biological systems. This Charybdis feriata (Crucifix crab) protein is Superoxide dismutase [Mn], mitochondrial.